We begin with the raw amino-acid sequence, 406 residues long: Peptidase T (406 aa).

His77 lines the Zn(2+) pocket. Asp79 is an active-site residue. Asp139 contributes to the Zn(2+) binding site. The active-site Proton acceptor is Glu173. 3 residues coordinate Zn(2+): Glu174, Asp196, and His377.

Belongs to the peptidase M20B family. It depends on Zn(2+) as a cofactor.

The protein localises to the cytoplasm. The enzyme catalyses Release of the N-terminal residue from a tripeptide.. Functionally, cleaves the N-terminal amino acid of tripeptides. The polypeptide is Peptidase T (Parabacteroides distasonis (strain ATCC 8503 / DSM 20701 / CIP 104284 / JCM 5825 / NCTC 11152)).